The chain runs to 405 residues: Eukaryotic translation initiation factor 5 (405 aa).

Glycine 27–threonine 34 provides a ligand contact to GTP. Residues asparagine 143–leucine 202 are disordered. Serine 170 and serine 172 each carry phosphoserine. The segment covering glycine 177–proline 192 has biased composition (polar residues). Phosphothreonine is present on threonine 191. Serine 228 is subject to Phosphoserine. The W2 domain occupies valine 241 to glutamate 402. Threonine 317 is modified (phosphothreonine). Serine 397 carries the phosphoserine modification.

It belongs to the eIF-2-beta/eIF-5 family. In terms of assembly, monomer. The factors eIF-1, eIF-2, eIF-3, TIF5/eIF-5 and methionyl-tRNAi form a multifactor complex (MFC) that may bind to the 40S ribosome. TIF32, NIP1 and TIF5/eIF-5 comprise a minimal 40S-ribosome-binding unit. Interacts with NIP1. Interacts with SUI3.

In terms of biological role, catalyzes the hydrolysis of GTP bound to the 40S ribosomal initiation complex (40S.mRNA.Met-tRNA[F].eIF-2.GTP) with the subsequent joining of a 60S ribosomal subunit resulting in the release of eIF-2 and the guanine nucleotide. The subsequent joining of a 60S ribosomal subunit results in the formation of a functional 80S initiation complex (80S.mRNA.Met-tRNA[F]). eIF-5 is essential for cell viability. The sequence is that of Eukaryotic translation initiation factor 5 (TIF5) from Saccharomyces cerevisiae (strain ATCC 204508 / S288c) (Baker's yeast).